The primary structure comprises 352 residues: tRNA pseudouridine synthase D (352 aa).

Residue aspartate 81 is the Nucleophile of the active site. One can recognise a TRUD domain in the interval 157–303; the sequence is GIPNYFGAQR…MSHERRILRL (147 aa).

Belongs to the pseudouridine synthase TruD family.

It carries out the reaction uridine(13) in tRNA = pseudouridine(13) in tRNA. Functionally, responsible for synthesis of pseudouridine from uracil-13 in transfer RNAs. The polypeptide is tRNA pseudouridine synthase D (Pseudomonas fluorescens (strain Pf0-1)).